The primary structure comprises 62 residues: ATP synthase subunit J, mitochondrial (62 aa).

A helical membrane pass occupies residues 13–32; that stretch reads IVKPLWPYAVGGVITFFLFA.

In terms of assembly, F-type ATP synthases have 2 components, the catalytic core F(1) and the membrane-embedded component F(0), linked together by a central stalk and a peripheral stalk. The central stalk, also called rotor shaft, is often seen as part of F(1). The peripheral stalk is seen as part of F(0). F(0) contains the membrane channel next to the rotor. F-type ATP synthases form dimers but each monomer functions independently in ATP generation. The dimer consists of 17 different polypeptides: ATP1 (subunit alpha, 3 molecules per monomer, part of F(1)), ATP2 (subunit beta, 3 copies per monomer, part of F(1)), ATP3 (subunit gamma, part of the central stalk), ATP4 (subunit b, part of the peripheral stalk), ATP5/OSCP (subunit 5/OSCP, part of the peripheral stalk), ATP6 (subunit a, part of the peripheral stalk), ATP7 (subunit d, part of the peripheral stalk), ATP8 (subunit 8, part of the peripheral stalk), OLI1 (subunit c, part of the rotor, 10 molecules per monomer), ATP14 (subunit h, part of the peripheral stalk), ATP15 (subunit epsilon, part of the central stalk), ATP16 (subunit delta, part of the central stalk), ATP17 (subunit f, part of the peripheral stalk), ATP18 (subunit i/j, part of the peripheral stalk), ATP19 (subunit k, dimer-specific, at interface between monomers), ATP20 (subunit g, at interface between monomers), TIM11 (subunit e, at interface between monomers).

It localises to the mitochondrion inner membrane. In terms of biological role, mitochondrial membrane ATP synthase (F(1)F(0) ATP synthase or Complex V) produces ATP from ADP in the presence of a proton gradient across the membrane which is generated by electron transport complexes of the respiratory chain. F-type ATP synthases consist of two structural domains, F(1) - containing the extramembraneous catalytic core, and F(0) - containing the membrane proton channel, linked together by a central stalk and a peripheral stalk. During catalysis, ATP synthesis in the catalytic domain of F(1) is coupled via a rotary mechanism of the central stalk subunits to proton translocation. Part of the complex F(0) domain. Minor subunit located with subunit a/ATP6 in the membrane. The chain is ATP synthase subunit J, mitochondrial from Yarrowia lipolytica (strain CLIB 122 / E 150) (Yeast).